Reading from the N-terminus, the 1675-residue chain is MAQILPIRFQEHLQLQNLGINPANIGFSTLTMESDKFICIREKVGEQAQVVIIDMNDPSNPIRRPISADSAIMNPASKVIALKAGKTLQIFNIEMKSKMKAHTMTDDVTFWKWISLNTVALVTDNAVYHWSMEGESQPVKMFDRHSSLAGCQIINYRTDAKQKWLLLTGISAQQNRVVGAMQLYSVDRKVSQPIEGHAASFAQFKMEGNAEESTLFCFAVRGQAGGKLHIIEVGTPPTGNQPFPKKAVDVFFPPEAQNDFPVAMQISEKHDVVFLITKYGYIHLYDLETGTCIYMNRISGETIFVTAPHEATAGIIGVNRKGQVLSVCVEEENIIPYITNVLQNPDLALRMAVRNNLAGAEELFARKFNALFAQGNYSEAAKVAANAPKGILRTPDTIRRFQSVPAQPGQTSPLLQYFGILLDQGQLNKYESLELCRPVLQQGRKQLLEKWLKEDKLECSEELGDLVKSVDPTLALSVYLRANVPNKVIQCFAETGQVQKIVLYAKKVGYTPDWIFLLRNVMRISPDQGQQFAQMLVQDEEPLADITQIVDVFMEYNLIQQCTAFLLDALKNNRPSEGPLQTRLLEMNLMHAPQVADAILGNQMFTHYDRAHIAQLCEKAGLLQRALEHFTDLYDIKRAVVHTHLLNPEWLVNYFGSLSVEDSLECLRAMLSANIRQNLQICVQVASKYHEQLSTQSLIELFESFKSFEGLFYFLGSIVNFSQDPDVHFKYIQAACKTGQIKEVERICRESNCYDPERVKNFLKEAKLTDQLPLIIVCDRFDFVHDLVLYLYRNNLQKYIEIYVQKVNPSRLPVVIGGLLDVDCSEDVIKNLILVVRGQFSTDELVAEVEKRNRLKLLLPWLEARIHEGCEEPATHNALAKIYIDSNNNPERFLRENPYYDSRVVGKYCEKRDPHLACVAYERGQCDLELINVCNENSLFKSLSRYLVRRKDPELWGSVLLESNPYRRPLIDQVVQTALSETQDPEEVSVTVKAFMTADLPNELIELLEKIVLDNSVFSEHRNLQNLLILTAIKADRTRVMEYINRLDNYDAPDIANIAISNELFEEAFAIFRKFDVNTSAVQVLIEHIGNLDRAYEFAERCNEPAVWSQLAKAQLQKGMVKEAIDSYIKADDPSSYMEVVQAANTSGNWEELVKYLQMARKKARESYVETELIFALAKTNRLAELEEFINGPNNAHIQQVGDRCYDEKMYDAAKLLYNNVSNFGRLASTLVHLGEYQAAVDGARKANSTRTWKEVCFACVDGKEFRLAQMCGLHIVVHADELEELINYYQDRGYFEELITMLEAALGLERAHMGMFTELAILYSKFKPQKMREHLELFWSRVNIPKVLRAAEQAHLWAELVFLYDKYEEYDNAIITMMNHPTDAWKEGQFKDIITKVANVELYYRAIQFYLEFKPLLLNDLLMVLSPRLDHTRAVNYFSKVKQLPLVKPYLRSVQNHNNKSVNESLNNLFITEEDYQALRTSIDAYDNFDNISLAQRLEKHELIEFRRIAAYLFKGNNRWKQSVELCKKDSLYKDAMQYASESKDTELAEELLQWFLQEEKRECFGACLFTCYDLLRPDVVLETAWRHNIMDFAMPYFIQVMKEYLTKVDKLDASESLRKEEEQATETQPIVYGQPQLMLTAGPSVAVPPQAPFGYGYTAPAYGQPQPGFGYSM.

At A2 the chain carries N-acetylalanine. Residues 2–479 form a globular terminal domain region; the sequence is AQILPIRFQE…VDPTLALSVY (478 aa). 7 WD40-like repeat regions span residues 24–67, 68–107, 108–149, 150–195, 196–257, 258–301, and 302–330; these read NIGF…RPIS, ADSAIMNPASKVIALKAGKTLQIFNIEMKSKMKAHTMTDD, VTFW…SSLA, GCQI…QPIE, GHAA…PEAQ, NDFP…ISGE, and TIFVTAPHEATAGIIGVNRKGQVLSVCVE. S67 is subject to Phosphoserine. Residue T105 is modified to Phosphothreonine. Residue Y184 is modified to Phosphotyrosine. T394 is subject to Phosphothreonine. Residues 449 to 465 form a binding site for the uncoating ATPase, involved in lattice disassembly region; the sequence is EKWLKEDKLECSEELGD. Residues 480 to 523 form a flexible linker region; that stretch reads LRANVPNKVIQCFAETGQVQKIVLYAKKVGYTPDWIFLLRNVMR. Positions 524–634 are distal segment; sequence ISPDQGQQFA…RALEHFTDLY (111 aa). The tract at residues 524–1675 is heavy chain arm; the sequence is ISPDQGQQFA…QPQPGFGYSM (1152 aa). CHCR repeat units lie at residues 537–683, 686–828, 833–972, 979–1124, 1128–1269, 1274–1420, and 1423–1566; these read VQDE…QICV, ASKY…SEDV, ILVV…PLID, LSET…VKEA, YIKA…FRLA, LHIV…LLLN, and LMVL…RECF. Y634 bears the Phosphotyrosine mark. Residues 639-1675 are proximal segment; that stretch reads AVVHTHLLNP…QPQPGFGYSM (1037 aa). K737 is subject to N6-succinyllysine. K856 is subject to N6-acetyllysine. Y899 bears the Phosphotyrosine mark. At S1167 the chain carries Phosphoserine. The residue at position 1206 (Y1206) is a Phosphotyrosine. The interval 1213-1522 is involved in binding clathrin light chain; it reads AAKLLYNNVS…YLFKGNNRWK (310 aa). A Phosphoserine modification is found at S1229. K1441 carries the post-translational modification N6-acetyllysine; alternate. K1441 is modified (N6-succinyllysine; alternate). Phosphotyrosine occurs at positions 1477 and 1487. At S1494 the chain carries Phosphoserine. K1501 bears the N6-acetyllysine mark. Residues 1550–1675 are trimerization; it reads AEELLQWFLQ…QPQPGFGYSM (126 aa).

This sequence belongs to the clathrin heavy chain family. Clathrin triskelions, composed of 3 heavy chains and 3 light chains, are the basic subunits of the clathrin coat. In the presence of light chains, hub assembly is influenced by both the pH and the concentration of calcium. Interacts with HIP1. Interacts with DENND1A, DENND1B and DENND1C. Interacts with OCRL. Interacts with ERBB2. Interacts with FKBP6. Interacts with CKAP5 and TACC3 forming the TACC3/ch-TOG/clathrin complex located at spindle inter-microtubules bridges; the complex implicates clathrin triskelions; TACC3 and CLTC are proposed to form a composite microtubule interaction surface. Interacts with ATG16L1 (via N-terminus). Interacts with RFTN1; the interaction occurs in response to pathogens. Interacts with TMEM106B (via N-terminus). Interacts with DNAJC6; this interaction produces a local change in heavy-chain contacts, creating a detectable global distortion of the clathrin coat and leads to the recruitment of HSPA8.

Its subcellular location is the cytoplasmic vesicle membrane. The protein localises to the membrane. The protein resides in the coated pit. It is found in the melanosome. It localises to the cytoplasm. Its subcellular location is the cytoskeleton. The protein localises to the spindle. Clathrin is the major protein of the polyhedral coat of coated pits and vesicles. Two different adapter protein complexes link the clathrin lattice either to the plasma membrane or to the trans-Golgi network. Acts as a component of the TACC3/ch-TOG/clathrin complex proposed to contribute to stabilization of kinetochore fibers of the mitotic spindle by acting as inter-microtubule bridge. The TACC3/ch-TOG/clathrin complex is required for the maintenance of kinetochore fiber tension. Plays a role in early autophagosome formation. Interaction with DNAJC6 mediates the recruitment of HSPA8 to the clathrin lattice and creates local destabilization of the lattice promoting uncoating. The chain is Clathrin heavy chain 1 from Bos taurus (Bovine).